A 220-amino-acid polypeptide reads, in one-letter code: Elongation factor Ts, chloroplastic (220 aa).

This sequence belongs to the EF-Ts family.

The protein localises to the plastid. It localises to the chloroplast. Functionally, associates with the EF-Tu.GDP complex and induces the exchange of GDP to GTP. It remains bound to the aminoacyl-tRNA.EF-Tu.GTP complex up to the GTP hydrolysis stage on the ribosome. The polypeptide is Elongation factor Ts, chloroplastic (tsf) (Pyropia yezoensis (Susabi-nori)).